Reading from the N-terminus, the 88-residue chain is UPF0335 protein NGR_c28390 (88 aa).

This sequence belongs to the UPF0335 family.

This Sinorhizobium fredii (strain NBRC 101917 / NGR234) protein is UPF0335 protein NGR_c28390.